Reading from the N-terminus, the 215-residue chain is UPF0502 protein YceH (215 aa).

K80 carries the N6-acetyllysine modification.

This sequence belongs to the UPF0502 family.

The protein is UPF0502 protein YceH of Escherichia coli O127:H6 (strain E2348/69 / EPEC).